Here is a 441-residue protein sequence, read N- to C-terminus: tRNA modification GTPase MnmE (441 aa).

Residues R24, E81, and K121 each contribute to the (6S)-5-formyl-5,6,7,8-tetrahydrofolate site. Positions 218–366 constitute a TrmE-type G domain; that stretch reads GMVVAIAGPP…LLRELTRFAA (149 aa). Residues 228–233, 247–253, and 272–275 contribute to the GTP site; these read NVGKST, SPHAGTT, and DTAG. Mg(2+)-binding residues include S232 and T253. K441 is a (6S)-5-formyl-5,6,7,8-tetrahydrofolate binding site.

This sequence belongs to the TRAFAC class TrmE-Era-EngA-EngB-Septin-like GTPase superfamily. TrmE GTPase family. As to quaternary structure, homodimer. Heterotetramer of two MnmE and two MnmG subunits. The cofactor is K(+).

The protein localises to the cytoplasm. In terms of biological role, exhibits a very high intrinsic GTPase hydrolysis rate. Involved in the addition of a carboxymethylaminomethyl (cmnm) group at the wobble position (U34) of certain tRNAs, forming tRNA-cmnm(5)s(2)U34. The protein is tRNA modification GTPase MnmE of Rhodopseudomonas palustris (strain ATCC BAA-98 / CGA009).